The following is a 527-amino-acid chain: Peptide chain release factor 3 (527 aa).

In terms of domain architecture, tr-type G spans 9–278; it reads NKRRTFAIIS…GLTQWAPKPQ (270 aa). GTP-binding positions include 18–25, 86–90, and 140–143; these read SHPDAGKT, DTPGH, and NKLD.

The protein belongs to the TRAFAC class translation factor GTPase superfamily. Classic translation factor GTPase family. PrfC subfamily.

The protein localises to the cytoplasm. Increases the formation of ribosomal termination complexes and stimulates activities of RF-1 and RF-2. It binds guanine nucleotides and has strong preference for UGA stop codons. It may interact directly with the ribosome. The stimulation of RF-1 and RF-2 is significantly reduced by GTP and GDP, but not by GMP. The chain is Peptide chain release factor 3 (prfC) from Haemophilus influenzae (strain ATCC 51907 / DSM 11121 / KW20 / Rd).